Reading from the N-terminus, the 376-residue chain is Glutamate 5-kinase (376 aa).

Lys16 lines the ATP pocket. 3 residues coordinate substrate: Ser56, Asp143, and Asn155. Position 175 to 176 (175 to 176 (TD)) interacts with ATP. Residues 283–361 (RGALSLDEGA…RDIETTLGYV (79 aa)) enclose the PUA domain.

It belongs to the glutamate 5-kinase family.

It is found in the cytoplasm. It catalyses the reaction L-glutamate + ATP = L-glutamyl 5-phosphate + ADP. It participates in amino-acid biosynthesis; L-proline biosynthesis; L-glutamate 5-semialdehyde from L-glutamate: step 1/2. Functionally, catalyzes the transfer of a phosphate group to glutamate to form L-glutamate 5-phosphate. The chain is Glutamate 5-kinase from Halorhodospira halophila (strain DSM 244 / SL1) (Ectothiorhodospira halophila (strain DSM 244 / SL1)).